Consider the following 464-residue polypeptide: Argininosuccinate lyase (464 aa).

It belongs to the lyase 1 family. Argininosuccinate lyase subfamily.

Its subcellular location is the cytoplasm. The catalysed reaction is 2-(N(omega)-L-arginino)succinate = fumarate + L-arginine. Its pathway is amino-acid biosynthesis; L-arginine biosynthesis; L-arginine from L-ornithine and carbamoyl phosphate: step 3/3. This Moorella thermoacetica (strain ATCC 39073 / JCM 9320) protein is Argininosuccinate lyase.